We begin with the raw amino-acid sequence, 121 residues long: Small ribosomal subunit protein uS13 (121 aa).

A disordered region spans residues 93–121; the sequence is RGLPMRGQRTRTNARTRKGPRKAAQSLKK.

It belongs to the universal ribosomal protein uS13 family. In terms of assembly, part of the 30S ribosomal subunit. Forms a loose heterodimer with protein S19. Forms two bridges to the 50S subunit in the 70S ribosome.

Its function is as follows. Located at the top of the head of the 30S subunit, it contacts several helices of the 16S rRNA. In the 70S ribosome it contacts the 23S rRNA (bridge B1a) and protein L5 of the 50S subunit (bridge B1b), connecting the 2 subunits; these bridges are implicated in subunit movement. Contacts the tRNAs in the A and P-sites. The chain is Small ribosomal subunit protein uS13 from Albidiferax ferrireducens (strain ATCC BAA-621 / DSM 15236 / T118) (Rhodoferax ferrireducens).